We begin with the raw amino-acid sequence, 162 residues long: MGLETEKADVQLFMDDDSYSHHSGLEYADPEKFADSGQDRDPHRLNSHLKLGFEDVVAEPVTTHSFDKVWICSHALFEISKYVMYKFLTVFLAIPLAFLAGILFATLSCLHIWIIMPFVKTCLMVLPSVQTIWKSVTDAIIAPLCTSIGRSFSSVSLQLSQD.

Over 1–86 the chain is Cytoplasmic; sequence MGLETEKADV…FEISKYVMYK (86 aa). Tyr-19 is modified (phosphotyrosine; by SRC). A phosphoserine mark is found at Ser-20 and Ser-23. Residue Tyr-27 is modified to Phosphotyrosine; by SRC. Ser-36 carries the post-translational modification Phosphoserine. The helical intramembrane region spans 87-107; that stretch reads FLTVFLAIPLAFLAGILFATL. The Cytoplasmic portion of the chain corresponds to 108 to 162; that stretch reads SCLHIWIIMPFVKTCLMVLPSVQTIWKSVTDAIIAPLCTSIGRSFSSVSLQLSQD.

Belongs to the caveolin family. Monomer or homodimer. Interacts with CAV1; the interaction forms a stable heterooligomeric complex that is required for targeting to lipid rafts and for caveolae formation. Tyrosine phosphorylated forms do not form heterooligomers with the Tyr-19-phosphorylated form existing as a monomer or dimer, and the Tyr-27-form as a monomer only. Interacts (tyrosine phosphorylated form) with the SH2 domain-containing proteins, RASA1, NCK1 and SRC. Interacts (tyrosine phosphorylated form) with INSR, the interaction (Tyr-27-phosphorylated form) is increased on insulin stimulation. Interacts (Tyr-19 phosphorylated form) with MAPK1 (phosphorylated form); the interaction, promoted by insulin, leads to nuclear location and MAPK1 activation. Interacts with STAT3; the interaction is increased on insulin-induced tyrosine phosphorylation leading to STAT activation. Post-translationally, phosphorylated on serine and tyrosine residues. CAV1 promotes phosphorylation on Ser-23 which then targets the complex to the plasma membrane, lipid rafts and caveolae. Phosphorylation on Ser-36 appears to modulate mitosis in endothelial cells. Phosphorylation on both Tyr-19 and Tyr-27 is required for insulin-induced 'Ser-727' phosphorylation of STAT3 and its activation. Phosphorylation on Tyr-19 is required for insulin-induced phosphorylation of MAPK1 and DNA binding of STAT3. Tyrosine phosphorylation is induced by both EGF and insulin (By. similarity).

The protein localises to the nucleus. It is found in the cytoplasm. Its subcellular location is the golgi apparatus membrane. It localises to the cell membrane. The protein resides in the membrane. The protein localises to the caveola. In terms of biological role, may act as a scaffolding protein within caveolar membranes. Interacts directly with G-protein alpha subunits and can functionally regulate their activity. Acts as an accessory protein in conjunction with CAV1 in targeting to lipid rafts and driving caveolae formation. The Ser-36 phosphorylated form has a role in modulating mitosis in endothelial cells. Positive regulator of cellular mitogenesis of the MAPK signaling pathway. Required for the insulin-stimulated nuclear translocation and activation of MAPK1 and STAT3, and the subsequent regulation of cell cycle progression. The chain is Caveolin-2 (CAV2) from Plecturocebus moloch (Dusky titi monkey).